A 267-amino-acid chain; its full sequence is MRSQLLFSTHRLARCFGHRCSIFATTSHENALISTQKSIISMQTRAIHLTSFKFIRARHTDDKQEKNQNEGEDNQKGENKTTDQQDGPKKIDPSVIRKLRIYVLAVAGLSFVTSFIMLSQMFTGDRNSADGLTNEDFTRPGIPMKTFIDKYLKHGEVQRIVFVPNNSRAIAILHRGAVIDGKAASEASVIVEYPQNAQQFWADVRRAEGEIGIGLTEGVQIDLYQGMTTVKMIQLIIGVVILAWLGTQYGRLLRKRLLENQAKKGKN.

Residues 58–90 form a disordered region; that stretch reads RHTDDKQEKNQNEGEDNQKGENKTTDQQDGPKK. 2 helical membrane-spanning segments follow: residues 101 to 121 and 226 to 246; these read IYVLAVAGLSFVTSFIMLSQM and GMTTVKMIQLIIGVVILAWLG.

The protein resides in the membrane. This is an uncharacterized protein from Caenorhabditis elegans.